A 76-amino-acid polypeptide reads, in one-letter code: Large ribosomal subunit protein uL24 (76 aa).

Belongs to the universal ribosomal protein uL24 family. In terms of assembly, part of the 50S ribosomal subunit.

Functionally, one of two assembly initiator proteins, it binds directly to the 5'-end of the 23S rRNA, where it nucleates assembly of the 50S subunit. In terms of biological role, one of the proteins that surrounds the polypeptide exit tunnel on the outside of the subunit. In Sulfurimonas denitrificans (strain ATCC 33889 / DSM 1251) (Thiomicrospira denitrificans (strain ATCC 33889 / DSM 1251)), this protein is Large ribosomal subunit protein uL24.